The chain runs to 332 residues: Glycerol-3-phosphate dehydrogenase [NAD(P)+] (332 aa).

Residues Ser-11, Phe-12, Lys-32, and Lys-106 each contribute to the NADPH site. 3 residues coordinate sn-glycerol 3-phosphate: Lys-106, Gly-137, and Ser-139. Position 141 (Ala-141) interacts with NADPH. Positions 192, 245, 255, 256, and 257 each coordinate sn-glycerol 3-phosphate. Residue Lys-192 is the Proton acceptor of the active site. Arg-256 contributes to the NADPH binding site. Val-280 and Glu-282 together coordinate NADPH.

This sequence belongs to the NAD-dependent glycerol-3-phosphate dehydrogenase family.

The protein resides in the cytoplasm. The enzyme catalyses sn-glycerol 3-phosphate + NAD(+) = dihydroxyacetone phosphate + NADH + H(+). It catalyses the reaction sn-glycerol 3-phosphate + NADP(+) = dihydroxyacetone phosphate + NADPH + H(+). The protein operates within membrane lipid metabolism; glycerophospholipid metabolism. In terms of biological role, catalyzes the reduction of the glycolytic intermediate dihydroxyacetone phosphate (DHAP) to sn-glycerol 3-phosphate (G3P), the key precursor for phospholipid synthesis. The polypeptide is Glycerol-3-phosphate dehydrogenase [NAD(P)+] (Staphylococcus saprophyticus subsp. saprophyticus (strain ATCC 15305 / DSM 20229 / NCIMB 8711 / NCTC 7292 / S-41)).